Consider the following 352-residue polypeptide: Phenylalanine--tRNA ligase alpha subunit (352 aa).

Glu258 is a Mg(2+) binding site.

The protein belongs to the class-II aminoacyl-tRNA synthetase family. Phe-tRNA synthetase alpha subunit type 1 subfamily. In terms of assembly, tetramer of two alpha and two beta subunits. It depends on Mg(2+) as a cofactor.

The protein resides in the cytoplasm. The catalysed reaction is tRNA(Phe) + L-phenylalanine + ATP = L-phenylalanyl-tRNA(Phe) + AMP + diphosphate + H(+). This chain is Phenylalanine--tRNA ligase alpha subunit, found in Staphylococcus aureus (strain Mu3 / ATCC 700698).